The primary structure comprises 124 residues: ATP synthase epsilon chain (124 aa).

The protein belongs to the ATPase epsilon chain family. F-type ATPases have 2 components, CF(1) - the catalytic core - and CF(0) - the membrane proton channel. CF(1) has five subunits: alpha(3), beta(3), gamma(1), delta(1), epsilon(1). CF(0) has three main subunits: a, b and c.

Its subcellular location is the cell membrane. Its function is as follows. Produces ATP from ADP in the presence of a proton gradient across the membrane. This chain is ATP synthase epsilon chain, found in Streptomyces avermitilis (strain ATCC 31267 / DSM 46492 / JCM 5070 / NBRC 14893 / NCIMB 12804 / NRRL 8165 / MA-4680).